Consider the following 681-residue polypeptide: Minichromosome maintenance domain-containing protein 2 (681 aa).

A Phosphoserine modification is found at Ser-292. The MCM domain occupies 533 to 621 (KQFTTEDFEK…LIAALLLEIS (89 aa)).

Predominantly expressed in the gonads and the brain. Not detected in the heart, lung, nor embryonic fibroblasts.

Plays an important role in meiotic recombination and associated DNA double-strand break repair. In Mus musculus (Mouse), this protein is Minichromosome maintenance domain-containing protein 2 (Mcmdc2).